The following is a 335-amino-acid chain: Olfactory receptor 9K2 (335 aa).

Residues 1–50 (MLGSKPRVHLYILPCASQQVSTMGDRGTSNHSEMTDFILAGFRVRPELHI) lie on the Extracellular side of the membrane. N-linked (GlcNAc...) asparagine glycosylation occurs at Asn-30. Residues 51–71 (LLFLLFLFVYAMILLGNVGMM) form a helical membrane-spanning segment. At 72–79 (TIIMTDPR) the chain is on the cytoplasmic side. A helical membrane pass occupies residues 80–100 (LNTPMYFFLGNLSFIDLFYSS). Residues 101 to 124 (VIEPKAMINFWSENKSISFAGCVA) are Extracellular-facing. Asn-114 carries an N-linked (GlcNAc...) asparagine glycan. Cysteines 122 and 214 form a disulfide. A helical transmembrane segment spans residues 125–145 (QLFLFALLIVTEGFLLAAMAY). Residues 146–164 (DRFIAICNPLLYSVQMSTR) lie on the Cytoplasmic side of the membrane. A helical membrane pass occupies residues 165–185 (LCTQLVAGSYFCGCISSVIQT). The Extracellular portion of the chain corresponds to 186-222 (SMTFTLSFCASRAVDHFYCDSRPLQRLSCSDLFIHRM). A helical transmembrane segment spans residues 223-242 (ISFSLSCIIILPTIIVIIVS). Residues 243–262 (YMYIVSTVLKIHSTEGHKKA) are Cytoplasmic-facing. Residues 263–283 (FSTCSSHLGVVSVLYGAVFFM) traverse the membrane as a helical segment. At 284–296 (YLTPDRFPELSKV) the chain is on the extracellular side. The Cytoplasmic portion of the chain corresponds to 316–335 (RNKDVQEALKKFLEKKNIIL).

This sequence belongs to the G-protein coupled receptor 1 family.

The protein localises to the cell membrane. Functionally, odorant receptor. This is Olfactory receptor 9K2 (OR9K2) from Homo sapiens (Human).